A 90-amino-acid chain; its full sequence is Cell division protein CrgA (90 aa).

Residues 1 to 25 form a disordered region; sequence MPKARVTKNETAPVSSNPSANRTPV. The segment covering 9–22 has biased composition (polar residues); it reads NETAPVSSNPSANR. A run of 2 helical transmembrane segments spans residues 38–58 and 67–87; these read VIMF…YLVG and LGAW…LMTM.

The protein belongs to the CrgA family.

The protein resides in the cell membrane. In terms of biological role, involved in cell division. The chain is Cell division protein CrgA from Corynebacterium glutamicum (strain R).